A 132-amino-acid polypeptide reads, in one-letter code: Small ribosomal subunit protein uS11 (132 aa).

It belongs to the universal ribosomal protein uS11 family. As to quaternary structure, part of the 30S ribosomal subunit.

Functionally, located on the platform of the 30S subunit. The sequence is that of Small ribosomal subunit protein uS11 from Sulfurisphaera tokodaii (strain DSM 16993 / JCM 10545 / NBRC 100140 / 7) (Sulfolobus tokodaii).